The primary structure comprises 169 residues: Steroid receptor-associated and regulated protein (169 aa).

Interacts with 14-3-3 proteins. In terms of tissue distribution, expressed in breast tumors with a higher expression level in estrogen receptor-positive cancers.

May regulate the transcriptional function of androgen and estrogen receptors. The protein is Steroid receptor-associated and regulated protein of Homo sapiens (Human).